A 556-amino-acid chain; its full sequence is Formate--tetrahydrofolate ligase 1 (556 aa).

65–72 (TPAGEGKS) contributes to the ATP binding site.

Belongs to the formate--tetrahydrofolate ligase family.

The catalysed reaction is (6S)-5,6,7,8-tetrahydrofolate + formate + ATP = (6R)-10-formyltetrahydrofolate + ADP + phosphate. Its pathway is one-carbon metabolism; tetrahydrofolate interconversion. The polypeptide is Formate--tetrahydrofolate ligase 1 (Streptococcus pyogenes serotype M1).